Here is a 187-residue protein sequence, read N- to C-terminus: Ribosome-recycling factor (187 aa).

Belongs to the RRF family.

The protein localises to the cytoplasm. Functionally, responsible for the release of ribosomes from messenger RNA at the termination of protein biosynthesis. May increase the efficiency of translation by recycling ribosomes from one round of translation to another. The sequence is that of Ribosome-recycling factor from Ligilactobacillus salivarius (strain UCC118) (Lactobacillus salivarius).